The primary structure comprises 453 residues: Allantoinase (453 aa).

Residues His-59, His-61, Lys-146, His-186, His-242, and Asp-315 each contribute to the Zn(2+) site. Lys-146 carries the post-translational modification N6-carboxylysine.

The protein belongs to the metallo-dependent hydrolases superfamily. Allantoinase family. As to quaternary structure, homotetramer. The cofactor is Zn(2+). Post-translationally, carboxylation allows a single lysine to coordinate two zinc ions.

It catalyses the reaction (S)-allantoin + H2O = allantoate + H(+). It functions in the pathway nitrogen metabolism; (S)-allantoin degradation; allantoate from (S)-allantoin: step 1/1. Functionally, catalyzes the conversion of allantoin (5-ureidohydantoin) to allantoic acid by hydrolytic cleavage of the five-member hydantoin ring. This chain is Allantoinase, found in Escherichia coli O9:H4 (strain HS).